We begin with the raw amino-acid sequence, 280 residues long: Extracellular metalloprotease GLRG_06286 (280 aa).

Residues 1 to 17 form the signal peptide; the sequence is MQVTFTLVAALAGMASA. Asn51 carries N-linked (GlcNAc...) asparagine glycosylation. His196 is a Zn(2+) binding site. Residue Glu197 is part of the active site. Zn(2+) is bound at residue His200. A disordered region spans residues 217–236; sequence DSIADTPAQSSPSSGCPVGR. A disulfide bond links Cys232 and Cys259.

Belongs to the peptidase M43B family.

The protein resides in the secreted. Functionally, secreted metalloproteinase that allows assimilation of proteinaceous substrates. The chain is Extracellular metalloprotease GLRG_06286 from Colletotrichum graminicola (strain M1.001 / M2 / FGSC 10212) (Maize anthracnose fungus).